A 367-amino-acid polypeptide reads, in one-letter code: Germination protease (367 aa).

Residues 1–15 (MKEPLDLSKYSVRTD) constitute a propeptide that is removed on maturation.

It belongs to the peptidase A25 family. In terms of assembly, homotetramer. Autoproteolytically processed. The inactive tetrameric zymogen termed p46 autoprocesses to a smaller form termed p41, which is active only during spore germination.

The catalysed reaction is Endopeptidase action with P4 Glu or Asp, P1 preferably Glu &gt; Asp, P1' hydrophobic and P2' Ala.. Functionally, initiates the rapid degradation of small, acid-soluble proteins during spore germination. This chain is Germination protease, found in Bacillus mycoides (strain KBAB4) (Bacillus weihenstephanensis).